The primary structure comprises 704 residues: DNA ligase (704 aa).

Residues 58–62 (DYEYD), 107–108 (SL), and Glu138 each bind NAD(+). The active-site N6-AMP-lysine intermediate is the Lys140. NAD(+) is bound by residues Arg161, Glu199, Lys323, and Lys347. The Zn(2+) site is built by Cys441, Cys444, Cys459, and Cys464. Positions 621-704 (EKKGKLAGLN…LKLIGGENTE (84 aa)) constitute a BRCT domain.

Belongs to the NAD-dependent DNA ligase family. LigA subfamily. Mg(2+) is required as a cofactor. Mn(2+) serves as cofactor.

The catalysed reaction is NAD(+) + (deoxyribonucleotide)n-3'-hydroxyl + 5'-phospho-(deoxyribonucleotide)m = (deoxyribonucleotide)n+m + AMP + beta-nicotinamide D-nucleotide.. Functionally, DNA ligase that catalyzes the formation of phosphodiester linkages between 5'-phosphoryl and 3'-hydroxyl groups in double-stranded DNA using NAD as a coenzyme and as the energy source for the reaction. It is essential for DNA replication and repair of damaged DNA. In Sulfurihydrogenibium sp. (strain YO3AOP1), this protein is DNA ligase.